A 252-amino-acid polypeptide reads, in one-letter code: Triosephosphate isomerase (252 aa).

Residue 10 to 12 (NWK) coordinates substrate. His-96 functions as the Electrophile in the catalytic mechanism. Residue Glu-168 is the Proton acceptor of the active site. Substrate is bound by residues Gly-174, Ser-214, and 235–236 (GG).

The protein belongs to the triosephosphate isomerase family. Homodimer.

It localises to the cytoplasm. It catalyses the reaction D-glyceraldehyde 3-phosphate = dihydroxyacetone phosphate. Its pathway is carbohydrate biosynthesis; gluconeogenesis. It participates in carbohydrate degradation; glycolysis; D-glyceraldehyde 3-phosphate from glycerone phosphate: step 1/1. Involved in the gluconeogenesis. Catalyzes stereospecifically the conversion of dihydroxyacetone phosphate (DHAP) to D-glyceraldehyde-3-phosphate (G3P). The chain is Triosephosphate isomerase from Streptococcus equi subsp. zooepidemicus (strain MGCS10565).